The primary structure comprises 384 residues: Autophagy-related protein 25 (384 aa).

Coiled-coil stretches lie at residues Lys132 to Ser236 and Lys342 to Thr379. The tract at residues Glu224–Arg247 is disordered. Residues Ser236–Arg247 show a composition bias toward basic and acidic residues.

The protein belongs to the ADIP family.

The protein resides in the preautophagosomal structure membrane. Specifically required for selective degradation of peroxisomes via macropexophagy. This chain is Autophagy-related protein 25 (ATG25), found in Pichia angusta (Yeast).